We begin with the raw amino-acid sequence, 125 residues long: Desulfoferrodoxin (125 aa).

5 residues coordinate Fe cation: His49, His69, His75, Cys115, and His118.

This sequence belongs to the desulfoferrodoxin family. Requires Cu(2+) as cofactor.

It carries out the reaction reduced [rubredoxin] + superoxide + 2 H(+) = oxidized [rubredoxin] + H2O2. Its function is as follows. Catalyzes the reduction of superoxide to hydrogen peroxide, using electrons from NADH and NADH:rubredoxin oxidoreductase (NROR) and rubredoxin (Rd) as electron transport intermediaries between NADH and Dfx. Is a key factor in the superoxide reductase dependent part of a pathway for detoxification of reactive oxygen species (ROS) in C.acetobutylicum, an obligate anaerobic bacterium. The sequence is that of Desulfoferrodoxin (dfx) from Clostridium acetobutylicum (strain ATCC 824 / DSM 792 / JCM 1419 / IAM 19013 / LMG 5710 / NBRC 13948 / NRRL B-527 / VKM B-1787 / 2291 / W).